A 302-amino-acid chain; its full sequence is Monopolin complex subunit MAM1 (302 aa).

2 disordered regions span residues 53–83 (YHKEHSVKPKQNSGNVAAKEDKDTQHLQNNV) and 257–276 (TSENPFSSSPNTKKIKSKGK). Positions 257–268 (TSENPFSSSPNT) are enriched in polar residues.

Component of the monopolin complex composed of at least CSM1, LRS4 and MAM1. The complex associates with the kinetochore during late pachytene. Phosphorylated by CDC5. This phosphorylation is required for the location to the kinetochores during late pachytene.

The protein resides in the nucleus. Its function is as follows. Component of the monopolin complex which promotes monoorientation during meiosis I, required for chromosome segregation during meiosis. The protein is Monopolin complex subunit MAM1 (MAM1) of Saccharomyces cerevisiae (strain ATCC 204508 / S288c) (Baker's yeast).